Consider the following 121-residue polypeptide: UPF0145 protein SAV_4658 (121 aa).

This sequence belongs to the UPF0145 family.

In Streptomyces avermitilis (strain ATCC 31267 / DSM 46492 / JCM 5070 / NBRC 14893 / NCIMB 12804 / NRRL 8165 / MA-4680), this protein is UPF0145 protein SAV_4658.